The following is a 646-amino-acid chain: Cytochrome b translation regulator cbp8 (646 aa).

As to quaternary structure, component of a complex, at least composed of cbp7 and cbp8.

The protein localises to the mitochondrion. Functionally, translation factor for cob1/cytochrome b; plays a role in cob1 mRNA stabilization and required for correct folding of the protein. The protein is Cytochrome b translation regulator cbp8 of Schizosaccharomyces pombe (strain 972 / ATCC 24843) (Fission yeast).